The following is a 350-amino-acid chain: Ketol-acid reductoisomerase (NADP(+)) (350 aa).

Residues 3-183 (AQIWYEDDGD…GALRAGAIKT (181 aa)) enclose the KARI N-terminal Rossmann domain. NADP(+)-binding positions include 26–29 (YGSQ), arginine 49, serine 52, serine 54, and 84–87 (DQYQ). Residue histidine 109 is part of the active site. Glycine 135 contributes to the NADP(+) binding site. A KARI C-terminal knotted domain is found at 184-327 (TFKEETETDL…PKLRAMFSWN (144 aa)). Positions 192, 196, 228, and 232 each coordinate Mg(2+). Serine 253 serves as a coordination point for substrate.

It belongs to the ketol-acid reductoisomerase family. The cofactor is Mg(2+).

It catalyses the reaction (2R)-2,3-dihydroxy-3-methylbutanoate + NADP(+) = (2S)-2-acetolactate + NADPH + H(+). The catalysed reaction is (2R,3R)-2,3-dihydroxy-3-methylpentanoate + NADP(+) = (S)-2-ethyl-2-hydroxy-3-oxobutanoate + NADPH + H(+). Its pathway is amino-acid biosynthesis; L-isoleucine biosynthesis; L-isoleucine from 2-oxobutanoate: step 2/4. It participates in amino-acid biosynthesis; L-valine biosynthesis; L-valine from pyruvate: step 2/4. Functionally, involved in the biosynthesis of branched-chain amino acids (BCAA). Catalyzes an alkyl-migration followed by a ketol-acid reduction of (S)-2-acetolactate (S2AL) to yield (R)-2,3-dihydroxy-isovalerate. In the isomerase reaction, S2AL is rearranged via a Mg-dependent methyl migration to produce 3-hydroxy-3-methyl-2-ketobutyrate (HMKB). In the reductase reaction, this 2-ketoacid undergoes a metal-dependent reduction by NADPH to yield (R)-2,3-dihydroxy-isovalerate. In Bifidobacterium animalis subsp. lactis (strain AD011), this protein is Ketol-acid reductoisomerase (NADP(+)).